The chain runs to 333 residues: L-lactate dehydrogenase B chain (333 aa).

NAD(+) contacts are provided by residues 29 to 57 and Arg-99; that span reads GQVG…LEDK. Positions 106, 138, and 169 each coordinate substrate. NAD(+) is bound at residue Asn-138. Residue His-193 is the Proton acceptor of the active site. Thr-248 lines the substrate pocket.

The protein belongs to the LDH/MDH superfamily. LDH family. As to quaternary structure, homotetramer.

The protein localises to the cytoplasm. The enzyme catalyses (S)-lactate + NAD(+) = pyruvate + NADH + H(+). It functions in the pathway fermentation; pyruvate fermentation to lactate; (S)-lactate from pyruvate: step 1/1. Interconverts simultaneously and stereospecifically pyruvate and lactate with concomitant interconversion of NADH and NAD(+). This chain is L-lactate dehydrogenase B chain (LDHB), found in Sceloporus woodi (Florida scrub lizard).